A 341-amino-acid polypeptide reads, in one-letter code: THO complex subunit 6 homolog (341 aa).

7 WD repeats span residues 22 to 61 (RLHMTIFSQSVSPCGKFLAAGNNYGQIAIFSLSAALSSEA), 74 to 112 (AHDGPVYSMVSTDRHLLSAGDGEVKGWLWAEILKKGCKE), 124 to 165 (LEVP…RALR), 166 to 205 (GHTDYIHCLALRERSPEVLSGGEDGAVRLWDLRIAKEVQT), 215 to 254 (SRPHNGRWIGCLATDSDWMVCGGGPALTLWHLRSSTPTTV), 256 to 293 (PIRAPQKHVTFYQDLILSAGQGCCVNHWQLSGELKAQV), and 295 to 339 (GSSP…AFSL). A Phosphoserine modification is found at Ser180.

Belongs to the WD repeat THOC6 family. As to quaternary structure, component of the THO subcomplex, which is composed of THOC1, THOC2, THOC3, THOC5, THOC6 and THOC7. The THO subcomplex interacts with DDX39B to form the THO-DDX39B complex which multimerizes into a 28-subunit tetrameric assembly. Component of the transcription/export (TREX) complex at least composed of ALYREF/THOC4, DDX39B, SARNP/CIP29, CHTOP and the THO subcomplex; in the complex interacts with THOC5; together with THOC5 and THOC7, plays a key structural role in the oligomerization of the THO-DDX39B complex. TREX seems to have a dynamic structure involving ATP-dependent remodeling.

It localises to the nucleus. It is found in the nucleus speckle. Its function is as follows. Component of the THO subcomplex of the TREX complex which is thought to couple mRNA transcription, processing and nuclear export, and which specifically associates with spliced mRNA and not with unspliced pre-mRNA. Plays a key structural role in the oligomerization of the THO-DDX39B complex. TREX is recruited to spliced mRNAs by a transcription-independent mechanism, binds to mRNA upstream of the exon-junction complex (EJC) and is recruited in a splicing- and cap-dependent manner to a region near the 5' end of the mRNA where it functions in mRNA export to the cytoplasm via the TAP/NXF1 pathway. Plays a role in apoptosis negative control involved in brain development. The chain is THO complex subunit 6 homolog (Thoc6) from Mus musculus (Mouse).